A 750-amino-acid chain; its full sequence is Phosphate transporter PHO1 homolog 7 (750 aa).

One can recognise an SPX domain in the interval 1 to 298; sequence MKFGKDFVRQ…SRSAAKPYME (298 aa). The Cytoplasmic portion of the chain corresponds to 1-350; it reads MKFGKDFVRQ…KVKKEKHRIT (350 aa). The helical transmembrane segment at 351–371 threads the bilayer; the sequence is FSTGFFVGCTVSLVVALVMFI. At 372-391 the chain is on the extracellular side; sequence HARNIMGAVGHKVYMETMFP. The chain crosses the membrane as a helical span at residues 392–412; that stretch reads LYSLFAFVVLHMIMYASNIYF. Residues 413–435 are Cytoplasmic-facing; the sequence is WKRYRVNYPFIFGFKEGTELGYR. A helical transmembrane segment spans residues 436-456; the sequence is HVLLLSFGLGTLALCAVLINL. The Extracellular segment spans residues 457–472; the sequence is DMEMDPNTNDYKTMTE. Residues 473 to 493 traverse the membrane as a helical segment; that stretch reads LLPMFILALVVAILFCPFNIF. Residues 494-622 lie on the Cytoplasmic side of the membrane; it reads YRSSRVFFLM…YSFNRGNIWK (129 aa). One can recognise an EXS domain in the interval 557–750; it reads RSSDVYSTFY…NYNEEEDRDS (194 aa). Residues 623-643 form a helical membrane-spanning segment; it reads ISAWVFSALATFYGTYWDIVF. The Extracellular segment spans residues 644-666; sequence DWGLLHRPSKHLLREKLLVPHKA. Residues 667 to 687 traverse the membrane as a helical segment; it reads VYYVAIVLNIVLRMAWLQTVL. Topologically, residues 688-750 are cytoplasmic; sequence DFNLSFLHRE…NYNEEEDRDS (63 aa).

Belongs to the SYG1 (TC 2.A.94) family. In terms of tissue distribution, expressed in root tips, vascular cylinders of roots and filaments, leaf hydathodes, stem, receptacle and stigma apex.

It localises to the cell membrane. Functionally, may transport inorganic phosphate (Pi). This is Phosphate transporter PHO1 homolog 7 (PHO1-H7) from Arabidopsis thaliana (Mouse-ear cress).